Here is a 62-residue protein sequence, read N- to C-terminus: Photosystem II reaction center protein Z (62 aa).

2 helical membrane passes run alanine 8–alanine 28 and phenylalanine 41–isoleucine 61.

The protein belongs to the PsbZ family. In terms of assembly, PSII is composed of 1 copy each of membrane proteins PsbA, PsbB, PsbC, PsbD, PsbE, PsbF, PsbH, PsbI, PsbJ, PsbK, PsbL, PsbM, PsbT, PsbY, PsbZ, Psb30/Ycf12, at least 3 peripheral proteins of the oxygen-evolving complex and a large number of cofactors. It forms dimeric complexes.

The protein resides in the plastid. It localises to the chloroplast thylakoid membrane. Functionally, may control the interaction of photosystem II (PSII) cores with the light-harvesting antenna, regulates electron flow through the 2 photosystem reaction centers. PSII is a light-driven water plastoquinone oxidoreductase, using light energy to abstract electrons from H(2)O, generating a proton gradient subsequently used for ATP formation. The polypeptide is Photosystem II reaction center protein Z (Jasminum nudiflorum (Winter jasmine)).